Reading from the N-terminus, the 98-residue chain is Lipolysis-activating peptide 1-alpha chain (98 aa).

The signal sequence occupies residues 1–22 (MMKFVLFGMIVILFSLMGSIRG). Residues 26-89 (PGNYPTNAYG…IWNAVKNHCT (64 aa)) form the LCN-type CS-alpha/beta domain. Intrachain disulfides connect Cys-40–Cys-63, Cys-49–Cys-68, and Cys-53–Cys-70. Asparagine amide is present on Asn-96.

Belongs to the long (3 C-C) scorpion toxin superfamily. Monomer (edited version) and heterodimer (non-edited version) of this alpha chain and a beta chain (AC Q95P90). In terms of tissue distribution, expressed by the venom gland.

The protein localises to the secreted. The heterodimer non-edited LVP1 induces lipolysis in rat adipocytes. Induction of lipolysis by LVP1 appears to be mediated through the beta-2 adrenergic receptor pathway (ADRB2). Its function is as follows. The edited BmKBTx, similar to beta-toxins, may modulate voltage-gated sodium channels (Nav) and may block voltage-gated potassium channels (Kv). Seems to be a rare component in the venom. The sequence is that of Lipolysis-activating peptide 1-alpha chain (LVP1a) from Olivierus martensii (Manchurian scorpion).